Consider the following 197-residue polypeptide: Imidazoleglycerol-phosphate dehydratase (197 aa).

Belongs to the imidazoleglycerol-phosphate dehydratase family.

The protein localises to the cytoplasm. The catalysed reaction is D-erythro-1-(imidazol-4-yl)glycerol 3-phosphate = 3-(imidazol-4-yl)-2-oxopropyl phosphate + H2O. Its pathway is amino-acid biosynthesis; L-histidine biosynthesis; L-histidine from 5-phospho-alpha-D-ribose 1-diphosphate: step 6/9. The polypeptide is Imidazoleglycerol-phosphate dehydratase (Gloeobacter violaceus (strain ATCC 29082 / PCC 7421)).